The following is a 336-amino-acid chain: C2H2 finger domain transcription factor mtfA (336 aa).

The segment at 1 to 245 is disordered; sequence MDVASLISPS…PSPGHQQMIS (245 aa). Composition is skewed to polar residues over residues 7–29 and 36–56; these read ISPS…SSAS and EQST…YSRT. A compositionally biased stretch (low complexity) spans 136-149; that stretch reads SPSTSSVSAASSSA. The segment covering 168–181 has biased composition (polar residues); the sequence is TDRSSISSQGSVQH. Positions 182–210 are enriched in low complexity; it reads AASAPYASPAPSVSSFSSPIEPSTPSTAA. Residues 216–245 are compositionally biased toward polar residues; that stretch reads PAPNTFQNPSPFPQTSTASLPSPGHQQMIS. C2H2-type zinc fingers lie at residues 272–294 and 300–325; these read YICR…SHSH and FRCT…RGCH.

It localises to the nucleus. Its function is as follows. Transcription factor that controls morphogenesis and virulence. Acts as a positive regulator of gliotixin and protease production. The sequence is that of C2H2 finger domain transcription factor mtfA from Aspergillus fumigatus (strain CBS 144.89 / FGSC A1163 / CEA10) (Neosartorya fumigata).